The sequence spans 318 residues: Thymidylate synthase (318 aa).

DUMP contacts are provided by residues arginine 25 and 180-181 (RR). The active-site Nucleophile is cysteine 200. Residues 220–223 (RSGD), asparagine 231, and 261–263 (HIY) contribute to the dUMP site. Position 223 (aspartate 223) interacts with (6R)-5,10-methylene-5,6,7,8-tetrahydrofolate. Alanine 317 serves as a coordination point for (6R)-5,10-methylene-5,6,7,8-tetrahydrofolate.

The protein belongs to the thymidylate synthase family. Bacterial-type ThyA subfamily. In terms of assembly, homodimer.

It is found in the cytoplasm. It catalyses the reaction dUMP + (6R)-5,10-methylene-5,6,7,8-tetrahydrofolate = 7,8-dihydrofolate + dTMP. It functions in the pathway pyrimidine metabolism; dTTP biosynthesis. Catalyzes the reductive methylation of 2'-deoxyuridine-5'-monophosphate (dUMP) to 2'-deoxythymidine-5'-monophosphate (dTMP) while utilizing 5,10-methylenetetrahydrofolate (mTHF) as the methyl donor and reductant in the reaction, yielding dihydrofolate (DHF) as a by-product. This enzymatic reaction provides an intracellular de novo source of dTMP, an essential precursor for DNA biosynthesis. The sequence is that of Thymidylate synthase from Lactobacillus gasseri (strain ATCC 33323 / DSM 20243 / BCRC 14619 / CIP 102991 / JCM 1131 / KCTC 3163 / NCIMB 11718 / NCTC 13722 / AM63).